We begin with the raw amino-acid sequence, 183 residues long: dCTP deaminase (183 aa).

Position 106–111 (106–111) interacts with dCTP; it reads KSTYAR. The active-site Proton donor/acceptor is Glu132. The dCTP site is built by Gln151, Tyr165, and Gln175.

Belongs to the dCTP deaminase family. In terms of assembly, homotrimer.

The catalysed reaction is dCTP + H2O + H(+) = dUTP + NH4(+). It participates in pyrimidine metabolism; dUMP biosynthesis; dUMP from dCTP (dUTP route): step 1/2. In terms of biological role, catalyzes the deamination of dCTP to dUTP. The chain is dCTP deaminase from Gluconobacter oxydans (strain 621H) (Gluconobacter suboxydans).